A 109-amino-acid chain; its full sequence is ATPase inhibitor, mitochondrial (109 aa).

The transit peptide at 1 to 22 directs the protein to the mitochondrion; sequence MAGSSSLLRAGIRNVLLMQMRR. The tract at residues 27 to 56 is N-terminal inhibitory region; it reads LGELGKGAGKGGGGGGSVREAGGAFGKRQA. Positions 27 to 109 are disordered; that stretch reads LGELGKGAGK…KSKIKKLNDD (83 aa). Positions 30 to 43 are enriched in gly residues; the sequence is LGKGAGKGGGGGGS. 2 stretches are compositionally biased toward basic and acidic residues: residues 55 to 69 and 77 to 98; these read QAAEEERYFRQKEQE and HHEEEIRHHKGEIERLQKEIER. The stretch at 71–109 forms a coiled coil; it reads IASLRKHHEEEIRHHKGEIERLQKEIERHKSKIKKLNDD. The antiparallel alpha-helical coiled coil region stretch occupies residues 78–109; it reads HEEEIRHHKGEIERLQKEIERHKSKIKKLNDD. A compositionally biased stretch (basic residues) spans 99-109; the sequence is HKSKIKKLNDD.

It belongs to the ATPase inhibitor family. As to quaternary structure, homodimer; represents the active form and is present at a pH value below 6.5. Homotetramer; represents the inactive form and is present at a pH value above 7.0.

It localises to the mitochondrion. Its function is as follows. Endogenous F(1)F(o)-ATPase inhibitor limiting ATP depletion when the mitochondrial membrane potential falls below a threshold and the F(1)F(o)-ATP synthase starts hydrolyzing ATP to pump protons out of the mitochondrial matrix. Required to avoid the consumption of cellular ATP when the F(1)F(o)-ATP synthase enzyme acts as an ATP hydrolase. Indirectly acts as a regulator of heme synthesis in erythroid tissues: regulates heme synthesis by modulating the mitochondrial pH and redox potential, allowing fech to efficiently catalyze the incorporation of iron into protoporphyrin IX to produce heme. The polypeptide is ATPase inhibitor, mitochondrial (Xenopus tropicalis (Western clawed frog)).